The chain runs to 275 residues: NH(3)-dependent NAD(+) synthetase (275 aa).

50–57 (GISGGVDS) lines the ATP pocket. Aspartate 56 provides a ligand contact to Mg(2+). Arginine 147 contacts deamido-NAD(+). Threonine 167 is a binding site for ATP. Glutamate 172 provides a ligand contact to Mg(2+). 2 residues coordinate deamido-NAD(+): lysine 180 and aspartate 187. Lysine 196 and threonine 218 together coordinate ATP. Residue 267 to 268 (HK) coordinates deamido-NAD(+).

This sequence belongs to the NAD synthetase family. As to quaternary structure, homodimer.

The enzyme catalyses deamido-NAD(+) + NH4(+) + ATP = AMP + diphosphate + NAD(+) + H(+). Its pathway is cofactor biosynthesis; NAD(+) biosynthesis; NAD(+) from deamido-NAD(+) (ammonia route): step 1/1. Functionally, catalyzes the ATP-dependent amidation of deamido-NAD to form NAD. Uses ammonia as a nitrogen source. The polypeptide is NH(3)-dependent NAD(+) synthetase (Pseudomonas fluorescens (strain Pf0-1)).